Reading from the N-terminus, the 159-residue chain is Phosphopantetheine adenylyltransferase (159 aa).

Thr9 is a binding site for substrate. ATP-binding positions include 9–10 (TF) and His17. 3 residues coordinate substrate: Lys41, Leu73, and Arg87. ATP is bound by residues 88–90 (GLR), Glu98, and 123–129 (YSFISST).

Belongs to the bacterial CoaD family. Homohexamer. Mg(2+) is required as a cofactor.

The protein localises to the cytoplasm. It carries out the reaction (R)-4'-phosphopantetheine + ATP + H(+) = 3'-dephospho-CoA + diphosphate. Its pathway is cofactor biosynthesis; coenzyme A biosynthesis; CoA from (R)-pantothenate: step 4/5. Functionally, reversibly transfers an adenylyl group from ATP to 4'-phosphopantetheine, yielding dephospho-CoA (dPCoA) and pyrophosphate. This chain is Phosphopantetheine adenylyltransferase, found in Pseudomonas syringae pv. syringae (strain B728a).